Consider the following 919-residue polypeptide: MEALILLSSQQSGSIKNNCASTSDIENVEDDDSIVIVSDSPTSSPVTLSTSSPVSSSSSSSPISTSVVPPTSSSSNKKANGLFSLIATELSQLDRSSPSSSPNTPKTPKTPKTPKTPKKTSPDSNEANQEVPKQKEVFEHTPTTTSTSTTPIKPVKDPKEKEKDLENDRKRQSFMLHWRFKPSTANNTNNNNNINNNNNINSSSSSNNNNNNNNNNNNNNNNNNNNNNNNNNNINNSSNNNSNCNNNNNNNNNNNNNNNNNSNNTQPLSPTTASQQANSQQNQQSSPTSSQTNETNGNPPEFNRGRRNSTPSLQNFVSHWKFDPKAHQKQQILQQHQQQLLLQQQEQQLQQQLLQQQQQQQQQQQQQQQQQQQQQQQQQQQQQQLQQQQQQQLQQQQQQQQQQQQQYFRPISPEHIYESPNENNNGGSFQKPNTHFHPYSRGPLGLNLKGVSGSPSHSPRVSQSPRVPSHPHSADQSPFHTPRQTERRLSLPSVPSYQAAYQSYQQQHTQQQTTIQQQQNQQHQYQQQYQQLQQLQQQQQQQQQQQQQQQQQQQQQQQQQQSSSPPSPPSPQSQPQNSSSPRQPSQTPQFYIPISNIHRHHQQIHSPHLSPHPPHSPHMPQSPHMPHSPHLMPHSPHSPHMPHSPHMPHSPHMPHSPHMPHSPHMPHSPHHMPHSPHYGSSPNLNGGKGSNNFLQSIPEVPYGNNLTNLNGSSVDSYSNSSPTPQSPPFSPHHQSTIKPCIITPSPRLLKTHNENYMSSPRQPLSPHNQHVYLSHSPSPPPSSSPHEHCNYIDKNDEYYSNNNNNNNYNNNNNNNNENCNHYHNNSSSHNYQTNNNYCNNNNNNNNNNNNNNNNNNNNNNNIINNNIIKEDKLPSMRDLLSHLNINHQDGPNSASSTPRLPTDHINNIDEKSKSKLLFF.

Residues 1-15 are compositionally biased toward low complexity; the sequence is MEALILLSSQQSGSI. Disordered regions lie at residues 1–167, 179–312, 415–491, 553–739, 751–863, and 883–906; these read MEAL…DLEN, RFKP…STPS, HIYE…RLSL, QQQQ…TIKP, THNE…NNII, and LNINHQDGPNSASSTPRLPTDHIN. The span at 16–25 shows a compositional bias: polar residues; it reads KNNCASTSDI. Composition is skewed to low complexity over residues 34–75, 96–107, and 141–153; these read IVIV…SSSS, SSPSSSPNTPKT, and TPTTTSTSTTPIK. Residues 154-167 show a composition bias toward basic and acidic residues; it reads PVKDPKEKEKDLEN. Residues 186–292 are compositionally biased toward low complexity; it reads NNTNNNNNIN…QQSSPTSSQT (107 aa). Positions 420-433 are enriched in polar residues; that stretch reads PNENNNGGSFQKPN. 4 stretches are compositionally biased toward low complexity: residues 450–471, 553–564, 573–589, and 618–635; these read GVSGSPSHSPRVSQSPRVPSHP, QQQQQQQQQSSS, SQPQNSSSPRQPSQTPQ, and HMPQSPHMPHSPHLMPHS. Residues 678-695 show a composition bias toward polar residues; that stretch reads YGSSPNLNGGKGSNNFLQ. Positions 712-723 are enriched in low complexity; sequence SSVDSYSNSSPT. Residues 754 to 768 are compositionally biased toward polar residues; that stretch reads ENYMSSPRQPLSPHN. Residues 785-797 show a composition bias toward basic and acidic residues; that stretch reads PHEHCNYIDKNDE. Residues 798-863 are compositionally biased toward low complexity; the sequence is YYSNNNNNNN…NNNNNNNNII (66 aa). Over residues 883–899 the composition is skewed to polar residues; sequence LNINHQDGPNSASSTPR.

This is an uncharacterized protein from Dictyostelium discoideum (Social amoeba).